Reading from the N-terminus, the 233-residue chain is Orotidine 5'-phosphate decarboxylase (233 aa).

Substrate is bound by residues aspartate 11, lysine 34, 61–70 (DLKLHDIPNT), threonine 117, arginine 179, glutamine 188, glycine 208, and arginine 209. Lysine 63 serves as the catalytic Proton donor.

It belongs to the OMP decarboxylase family. Type 1 subfamily. Homodimer.

It catalyses the reaction orotidine 5'-phosphate + H(+) = UMP + CO2. The protein operates within pyrimidine metabolism; UMP biosynthesis via de novo pathway; UMP from orotate: step 2/2. In terms of biological role, catalyzes the decarboxylation of orotidine 5'-monophosphate (OMP) to uridine 5'-monophosphate (UMP). The polypeptide is Orotidine 5'-phosphate decarboxylase (Streptococcus pneumoniae serotype 4 (strain ATCC BAA-334 / TIGR4)).